We begin with the raw amino-acid sequence, 115 residues long: UPF0102 protein Swol_1475 (115 aa).

This sequence belongs to the UPF0102 family.

This Syntrophomonas wolfei subsp. wolfei (strain DSM 2245B / Goettingen) protein is UPF0102 protein Swol_1475.